The sequence spans 218 residues: uncharacterized protein (218 aa).

The interval 1–67 (MARITNMGKR…KKKRSEYRRL (67 aa)) is disordered. A compositionally biased stretch (low complexity) spans 29–39 (NSSNTNEESSS). Positions 40–49 (QDNMKASFGS) are enriched in polar residues. Residues 58-67 (KKKRSEYRRL) show a composition bias toward basic residues. 3 CCHC-type zinc fingers span residues 77–94 (KFCF…DCPE), 100–117 (SICF…ACSK), and 124–141 (AKCF…QCEQ). The CCHC-type 4; atypical zinc finger occupies 152 to 168 (CCKFCSSVHHLAKDCDQ).

This is an uncharacterized protein from Schizosaccharomyces pombe (strain 972 / ATCC 24843) (Fission yeast).